The following is a 402-amino-acid chain: Cysteine-rich venom protein (402 aa).

A signal peptide spans 1-13; the sequence is MNLALFIIFATIF. The region spanning 57-199 is the SCP domain; it reads LETHNQLRNK…VKKVLYTCNY (143 aa).

Belongs to the CRISP family. Post-translationally, contains 7 disulfide bonds. Expressed by the venom gland.

Its subcellular location is the secreted. The chain is Cysteine-rich venom protein from Tityus serrulatus (Brazilian scorpion).